Consider the following 334-residue polypeptide: Thioredoxin reductase aclT (334 aa).

FAD contacts are provided by residues 16–19 (GGPA), 38–43 (NASIDR), isoleucine 93, alanine 122, aspartate 294, and 302–303 (TL).

The protein belongs to the class-II pyridine nucleotide-disulfide oxidoreductase family. Homodimer. FAD is required as a cofactor.

Its pathway is mycotoxin biosynthesis. Its function is as follows. Thioredoxin reductase; part of the gene cluster that mediates the biosynthesis of aspirochlorine (or antibiotic A30641), an unusual halogenated spiro compound with distinctive antifungal properties due to selective inhibition of protein biosynthesis, and which is also active against bacteria, viruses, and murine tumor cells. The non-ribosomal peptide synthetase (NRPS) aclP is responsible the formation of the diketopiperazine (DKP) core from the condensation of 2 phenylalanine residues. One Phe residue is tailored into chlorotyrosine by hydroxylation and chlorination, whereas the second Phe undergoes an unprecedented C-C bond cleavage to be converted into glycine. After formation of the DKP, sulfur is incorporated into the DKP by conjugation with glutathione by aclG, followed by its stepwise degradation to the thiol by aclI, aclJ and aclK, and the dithiol oxidation by aclT. In addition, oxygenases (aclB, aclC, aclL and aclO) and O-methyltransferases (aclM and aclU) act as tailoring enzymes to produce the intermediate dechloroaspirochlorine. Ultimately, chlorination of dechloroaspirochlorine by the halogenase aclH is the last step in the aspirochlorine pathway. The chain is Thioredoxin reductase aclT from Aspergillus oryzae (strain ATCC 42149 / RIB 40) (Yellow koji mold).